We begin with the raw amino-acid sequence, 293 residues long: Protease HtpX (293 aa).

The next 2 membrane-spanning stretches (helical) occupy residues 4–24 (IALFLLTNLAVMLVFGLVLSL) and 34–54 (GLMIMAGLFGFGGAFVSLLMS). Residue histidine 139 coordinates Zn(2+). The active site involves glutamate 140. Position 143 (histidine 143) interacts with Zn(2+). A run of 2 helical transmembrane segments spans residues 158 to 178 (VVNTFVIFISRLIAQIAAGFL) and 193 to 213 (MVYFAVSMVLELVFGILASII). Glutamate 222 lines the Zn(2+) pocket.

It belongs to the peptidase M48B family. The cofactor is Zn(2+).

The protein localises to the cell inner membrane. The protein is Protease HtpX of Yersinia pseudotuberculosis serotype O:1b (strain IP 31758).